Reading from the N-terminus, the 344-residue chain is Photosystem II protein D1 (344 aa).

T2 is modified (N-acetylthreonine). T2 is subject to Phosphothreonine. Helical transmembrane passes span 29 to 46 (YIGWFGVLMFPLLLTATS), 118 to 133 (HFLLGVACYMGREWEL), and 142 to 156 (WIAVAYSAPVAAATA). Residue H118 participates in chlorophyll a binding. Position 126 (Y126) interacts with pheophytin a. The [CaMn4O5] cluster site is built by D170 and E189. The chain crosses the membrane as a helical span at residues 197–218 (FHMLGVAGVFGGSLFSAMHGSL). Residue H198 coordinates chlorophyll a. A quinone-binding positions include H215 and 264–265 (SF). H215 lines the Fe cation pocket. Residue H272 participates in Fe cation binding. Residues 274-288 (FLAAWPVVCIWFTAL) form a helical membrane-spanning segment. Positions 332, 333, 342, and 344 each coordinate [CaMn4O5] cluster.

Belongs to the reaction center PufL/M/PsbA/D family. As to quaternary structure, PSII is composed of 1 copy each of membrane proteins PsbA, PsbB, PsbC, PsbD, PsbE, PsbF, PsbH, PsbI, PsbJ, PsbK, PsbL, PsbM, PsbT, PsbX, PsbY, PsbZ, Psb30/Ycf12, at least 3 peripheral proteins of the oxygen-evolving complex and a large number of cofactors. It forms dimeric complexes. The cofactor is The D1/D2 heterodimer binds P680, chlorophylls that are the primary electron donor of PSII, and subsequent electron acceptors. It shares a non-heme iron and each subunit binds pheophytin, quinone, additional chlorophylls, carotenoids and lipids. D1 provides most of the ligands for the Mn4-Ca-O5 cluster of the oxygen-evolving complex (OEC). There is also a Cl(-1) ion associated with D1 and D2, which is required for oxygen evolution. The PSII complex binds additional chlorophylls, carotenoids and specific lipids.. Tyr-161 forms a radical intermediate that is referred to as redox-active TyrZ, YZ or Y-Z.

The protein resides in the plastid. It localises to the chloroplast thylakoid membrane. The catalysed reaction is 2 a plastoquinone + 4 hnu + 2 H2O = 2 a plastoquinol + O2. Its function is as follows. Photosystem II (PSII) is a light-driven water:plastoquinone oxidoreductase that uses light energy to abstract electrons from H(2)O, generating O(2) and a proton gradient subsequently used for ATP formation. It consists of a core antenna complex that captures photons, and an electron transfer chain that converts photonic excitation into a charge separation. The D1/D2 (PsbA/PsbD) reaction center heterodimer binds P680, the primary electron donor of PSII as well as several subsequent electron acceptors. The sequence is that of Photosystem II protein D1 from Staurastrum punctulatum (Green alga).